The chain runs to 394 residues: Formate-dependent phosphoribosylglycinamide formyltransferase (394 aa).

N(1)-(5-phospho-beta-D-ribosyl)glycinamide is bound by residues glutamate 22–leucine 23 and glutamate 82. ATP-binding positions include arginine 114, lysine 155, serine 160 to glutamine 165, glutamate 195 to valine 198, and glutamate 203. One can recognise an ATP-grasp domain in the interval arginine 119 to leucine 308. The Mg(2+) site is built by glutamate 267 and glutamate 279. Residues aspartate 286, lysine 357, and arginine 364 to arginine 365 each bind N(1)-(5-phospho-beta-D-ribosyl)glycinamide.

This sequence belongs to the PurK/PurT family. In terms of assembly, homodimer.

It catalyses the reaction N(1)-(5-phospho-beta-D-ribosyl)glycinamide + formate + ATP = N(2)-formyl-N(1)-(5-phospho-beta-D-ribosyl)glycinamide + ADP + phosphate + H(+). It functions in the pathway purine metabolism; IMP biosynthesis via de novo pathway; N(2)-formyl-N(1)-(5-phospho-D-ribosyl)glycinamide from N(1)-(5-phospho-D-ribosyl)glycinamide (formate route): step 1/1. In terms of biological role, involved in the de novo purine biosynthesis. Catalyzes the transfer of formate to 5-phospho-ribosyl-glycinamide (GAR), producing 5-phospho-ribosyl-N-formylglycinamide (FGAR). Formate is provided by PurU via hydrolysis of 10-formyl-tetrahydrofolate. The protein is Formate-dependent phosphoribosylglycinamide formyltransferase of Tolumonas auensis (strain DSM 9187 / NBRC 110442 / TA 4).